Reading from the N-terminus, the 507-residue chain is ATP synthase subunit alpha, chloroplastic (507 aa).

170-177 (GDRQTGKT) is a binding site for ATP.

This sequence belongs to the ATPase alpha/beta chains family. In terms of assembly, F-type ATPases have 2 components, CF(1) - the catalytic core - and CF(0) - the membrane proton channel. CF(1) has five subunits: alpha(3), beta(3), gamma(1), delta(1), epsilon(1). CF(0) has four main subunits: a, b, b' and c.

The protein localises to the plastid. It localises to the chloroplast thylakoid membrane. The catalysed reaction is ATP + H2O + 4 H(+)(in) = ADP + phosphate + 5 H(+)(out). Produces ATP from ADP in the presence of a proton gradient across the membrane. The alpha chain is a regulatory subunit. The chain is ATP synthase subunit alpha, chloroplastic from Morus indica (Mulberry).